The primary structure comprises 32 residues: MSVLVYSFASFVLGWCLRSGITYFTRLMETSS.

A helical transmembrane segment spans residues 8–24; sequence FASFVLGWCLRSGITYF.

Belongs to the inovirus G9P protein family.

The protein resides in the virion. The protein localises to the host membrane. In terms of biological role, may initiate with G7P the virion concomitant assembly-budding process, by interacting with the packaging signal of the viral genome. The assembly-budding takes place at the host inner membrane. In turn, G7P and G9P are present at the end of the filamentous virion that emerges first from the bacterial host. This Escherichia coli (Bacteriophage f1) protein is Tail virion protein G9P (IX).